Consider the following 690-residue polypeptide: Polyribonucleotide nucleotidyltransferase (690 aa).

Residues Asp482 and Asp488 each coordinate Mg(2+). The 60-residue stretch at 549-608 (PRIITIQINPDRIRDVIGPGGKVIRALTEETGATIDIQDNGTVTIASVDGEAGAAAKRRI) folds into the KH domain. The region spanning 618-686 (DTIYDGKVAK…RQGKIKLSMK (69 aa)) is the S1 motif domain.

It belongs to the polyribonucleotide nucleotidyltransferase family. As to quaternary structure, component of the RNA degradosome, which is a multiprotein complex involved in RNA processing and mRNA degradation. Mg(2+) is required as a cofactor.

The protein resides in the cytoplasm. The enzyme catalyses RNA(n+1) + phosphate = RNA(n) + a ribonucleoside 5'-diphosphate. Involved in mRNA degradation. Catalyzes the phosphorolysis of single-stranded polyribonucleotides processively in the 3'- to 5'-direction. This chain is Polyribonucleotide nucleotidyltransferase, found in Acidithiobacillus ferrooxidans (strain ATCC 23270 / DSM 14882 / CIP 104768 / NCIMB 8455) (Ferrobacillus ferrooxidans (strain ATCC 23270)).